The chain runs to 537 residues: Tyrosine-protein kinase Fyn (537 aa).

Glycine 2 carries the N-myristoyl glycine lipid modification. Residues cysteine 3 and cysteine 6 are each lipidated (S-palmitoyl cysteine). Threonine 12 bears the Phosphothreonine; by PKC mark. An SH3 domain is found at 82–143; that stretch reads TGVTLFVALY…PSNYVAPVDS (62 aa). An SH2 domain is found at 149-246; that stretch reads WYFGKLGRKD…GLCCRLVVPC (98 aa). Residues 271 to 524 form the Protein kinase domain; sequence LQLIKRLGNG…YLQGFLEDYF (254 aa). Residues 277–285 and lysine 299 contribute to the ATP site; that span reads LGNGQFGEV. The Proton acceptor role is filled by aspartate 390. Tyrosine 420 is subject to Phosphotyrosine; by autocatalysis. Tyrosine 531 carries the post-translational modification Phosphotyrosine.

It belongs to the protein kinase superfamily. Tyr protein kinase family. SRC subfamily. As to quaternary structure, associates through its SH3 domain, to the p85 subunit of phosphatidylinositol 3-kinase. The cofactor is Mn(2+).

It catalyses the reaction L-tyrosyl-[protein] + ATP = O-phospho-L-tyrosyl-[protein] + ADP + H(+). Its activity is regulated as follows. Inhibited by phosphorylation of Tyr-531 by leukocyte common antigen and activated by dephosphorylation of this site. Its function is as follows. Tyrosine-protein kinase implicated in the control of cell growth. Plays a role in the regulation of intracellular calcium levels. Required in brain development and mature brain function with important roles in the regulation of axon growth, axon guidance, and neurite extension. Blocks axon outgrowth and attraction induced by ntn1 by phosphorylating its receptor ddc. The sequence is that of Tyrosine-protein kinase Fyn (fyn) from Xenopus laevis (African clawed frog).